Here is a 974-residue protein sequence, read N- to C-terminus: GATOR2 complex protein WDR59 (974 aa).

WD repeat units follow at residues glutamine 57–glycine 98, glycine 103–valine 143, serine 146–glutamate 185, alanine 189–asparagine 229, proline 232–histidine 276, phenylalanine 278–serine 318, and glutamine 319–histidine 362. The disordered stretch occupies residues histidine 350–arginine 374. The region spanning glutamine 393 to phenylalanine 494 is the RWD domain. Serine 564 bears the Phosphoserine mark. The WD 8 repeat unit spans residues leucine 668–cysteine 706. A phosphoserine mark is found at serine 821, serine 822, and serine 830. Residues leucine 831 to aspartate 852 are disordered. Residues aspartate 835–leucine 851 are compositionally biased toward basic and acidic residues. The C4-type zinc finger occupies tyrosine 901–phenylalanine 920. Zn(2+) is bound by residues cysteine 902, cysteine 905, cysteine 914, cysteine 917, cysteine 927, cysteine 938, histidine 943, histidine 946, histidine 949, cysteine 960, cysteine 964, cysteine 966, and cysteine 968. Residues threonine 921–threonine 973 form an RING-type; atypical zinc finger.

It belongs to the WD repeat WDR59 family. Component of the GATOR2 subcomplex, composed of MIOS, SEC13, SEH1L, WDR24 and WDR59. The GATOR2 complex interacts with CASTOR1 and CASTOR2; the interaction is negatively regulated by arginine. The GATOR2 complex interacts with SESN1, SESN2 and SESN3; the interaction is negatively regulated by amino acids. Interacts with DDB1-CUL4A/B E3 ligase complexes.

Its subcellular location is the lysosome membrane. With respect to regulation, the GATOR2 complex is negatively regulated by the upstream amino acid sensors CASTOR1 and SESN2, which sequester the GATOR2 complex in absence of amino acids. In the presence of abundant amino acids, GATOR2 is released from CASTOR1 and SESN2 and activated. As a component of the GATOR2 complex, functions as an activator of the amino acid-sensing branch of the mTORC1 signaling pathway. The GATOR2 complex indirectly activates mTORC1 through the inhibition of the GATOR1 subcomplex. GATOR2 probably acts as an E3 ubiquitin-protein ligase toward GATOR1. In the presence of abundant amino acids, the GATOR2 complex mediates ubiquitination of the NPRL2 core component of the GATOR1 complex, leading to GATOR1 inactivation. In the absence of amino acids, GATOR2 is inhibited, activating the GATOR1 complex. In Homo sapiens (Human), this protein is GATOR2 complex protein WDR59.